A 274-amino-acid polypeptide reads, in one-letter code: Diaminopimelate epimerase (274 aa).

3 residues coordinate substrate: Asn-11, Gln-44, and Asn-64. The Proton donor role is filled by Cys-73. Substrate is bound by residues 74–75 (GN), Asn-157, Asn-190, and 208–209 (ER). Cys-217 serves as the catalytic Proton acceptor. Residue 218–219 (GS) coordinates substrate.

It belongs to the diaminopimelate epimerase family. As to quaternary structure, homodimer.

It localises to the cytoplasm. The enzyme catalyses (2S,6S)-2,6-diaminopimelate = meso-2,6-diaminopimelate. The protein operates within amino-acid biosynthesis; L-lysine biosynthesis via DAP pathway; DL-2,6-diaminopimelate from LL-2,6-diaminopimelate: step 1/1. Catalyzes the stereoinversion of LL-2,6-diaminopimelate (L,L-DAP) to meso-diaminopimelate (meso-DAP), a precursor of L-lysine and an essential component of the bacterial peptidoglycan. The polypeptide is Diaminopimelate epimerase (Yersinia enterocolitica serotype O:8 / biotype 1B (strain NCTC 13174 / 8081)).